The primary structure comprises 470 residues: MSIVRQSCDCCRVRRVKCDRNRPCDRCRQRNLRCTYLQPLRKRGPKSIGESNLERAAEIQMVTVNNNIMAAPVMYKKVPKKVIDQCLRLYHDQLYVIWPMLSYDDLYKLLEENYEDCSTYWFLVSLSAATLSDLHTKIEYKKGFFFAGEQLCNLCMSSRRFFDDLSNSDIFRIMTYYCLHRCYAQFADTRTSYRLSCEAIGLIKIAGFHREETYEFLPFGEQQLIRKVYYLLLMTERYYAVYIKCVTSLDTTISPPQPEIVTDSRLSLDSFLEVIKVFTVPGKYFYDALATNSVNGSYTEDSLKRIWNELHISSLDIEPYSYGYIDYLFSRHWVRTLAWKLVLNKKDMRMNFFSNTNATHIPVEIAKDMLQDTLLTPIDLYDVHGPVIPMKALEIANALVDVVSKYDHNMKLEAWNILCDVSKFVFSLKHCNHKMFQRFSTKCQSALIDLPISRPLRLNDDSKDEVDIIP.

The segment at residues Cys-8–Cys-34 is a DNA-binding region (zn(2)-C6 fungal-type). Positions Arg-41–Gly-49 match the Nuclear localization signal motif.

The protein belongs to the MAL13 family.

Its subcellular location is the nucleus. Functionally, may regulate the transcription of maltase and maltose permease genes. The protein is Maltose fermentation regulatory protein YPR196W of Saccharomyces cerevisiae (strain ATCC 204508 / S288c) (Baker's yeast).